The following is a 227-amino-acid chain: AN1-type zinc finger protein 3 (227 aa).

An A20-type zinc finger spans residues 12 to 44 (PSLPPRCPCGFWGSSKTMNLCSKCFADFQKKQP). 4 residues coordinate Zn(2+): Cys-18, Cys-20, Cys-32, and Cys-35. Positions 41-151 (KKQPDDDSTP…RPEESGRSKQ (111 aa)) are disordered. 2 stretches are compositionally biased toward low complexity: residues 49–59 (TPSTSNSQSDL) and 66–77 (SDNNNTSVTTPT). 2 stretches are compositionally biased toward polar residues: residues 78 to 94 (LSPS…VTSP) and 111 to 127 (ITPT…SESE). Residues 135 to 148 (RLVENPERPEESGR) show a composition bias toward basic and acidic residues. The AN1-type zinc-finger motif lies at 151 to 200 (QKSRRRCFQCQTKLELVQQELGSCRCGYVFCMLHRLPEQHDCTFDHMGRG). Zn(2+) contacts are provided by Cys-157, Cys-160, Cys-174, Cys-176, Cys-181, His-184, His-190, and Cys-192.

The sequence is that of AN1-type zinc finger protein 3 (Zfand3) from Rattus norvegicus (Rat).